The primary structure comprises 184 residues: Antigen Sm21.7 (184 aa).

Residues 37–72 enclose the EF-hand domain; that stretch reads LDMKQVNEWIALFDVDKDQKITFEEFCRGLGLKQNE. Ca(2+) is bound by residues aspartate 50, aspartate 52, aspartate 54, lysine 56, and glutamate 61.

The protein is Antigen Sm21.7 (SM21.7) of Schistosoma mansoni (Blood fluke).